The following is a 674-amino-acid chain: Methionine--tRNA ligase (674 aa).

The 'HIGH' region motif lies at Pro12 to His22. The Zn(2+) site is built by Cys143, Cys146, Cys156, and Cys159. The 'KMSKS' region motif lies at Lys328–Ser332. Lys331 lines the ATP pocket. Residues Ser573–Lys674 form the tRNA-binding domain.

This sequence belongs to the class-I aminoacyl-tRNA synthetase family. MetG type 1 subfamily. As to quaternary structure, homodimer. It depends on Zn(2+) as a cofactor.

It localises to the cytoplasm. The enzyme catalyses tRNA(Met) + L-methionine + ATP = L-methionyl-tRNA(Met) + AMP + diphosphate. In terms of biological role, is required not only for elongation of protein synthesis but also for the initiation of all mRNA translation through initiator tRNA(fMet) aminoacylation. The polypeptide is Methionine--tRNA ligase (Nitrosococcus oceani (strain ATCC 19707 / BCRC 17464 / JCM 30415 / NCIMB 11848 / C-107)).